A 1469-amino-acid polypeptide reads, in one-letter code: ABC transporter G family member 36 (1469 aa).

N-acetylmethionine is present on Met-1. 3 positions are modified to phosphoserine: Ser-37, Ser-38, and Ser-40. Thr-43 carries the phosphothreonine modification. Ser-45 carries the post-translational modification Phosphoserine. The region spanning 171 to 444 (LGMIGIQFAK…FESFGFKCPE (274 aa)) is the ABC transporter 1 domain. An ATP-binding site is contributed by 204–211 (GPPSSGKT). Residues 522-735 (ELLKSCWDKE…AFNGLVVNEM (214 aa)) enclose the ABC transmembrane type-2 1 domain. Transmembrane regions (helical) follow at residues 540–560 (FFYVFKTVQIVIIAAITSTLF), 575–595 (LYIGALLFGMIINMFNGFAEM), 621–641 (LPTFLLGIPSSILESTAWMVV), 659–679 (FLLVFLIQQMAASLFRLIASV), 685–705 (IANTGGALTLLLVFLLGGFLL), 713–733 (WWGWAYWVSPLTYAFNGLVVN), and 772–792 (ISVGALLCFTALFNILFTLAL). The disordered stretch occupies residues 806 to 852 (PEEENEDADQGKDPMRRSLSTADGNRRGEVAMGRMSRDSAAEASGGA). A phosphoserine mark is found at Ser-825, Ser-841, and Ser-844. Positions 829 to 845 (GNRRGEVAMGRMSRDSA) are enriched in basic and acidic residues. The ABC transporter 2 domain occupies 867-1119 (MSFDDVKYFV…KVVEYFESFP (253 aa)). 912 to 919 (GVSGAGKT) serves as a coordination point for ATP. In terms of domain architecture, ABC transmembrane type-2 2 spans 1192-1406 (GQFKSCLWKQ…TVYGLIVSQY (215 aa)). Helical transmembrane passes span 1216–1236 (FIFTLATSLLIGTVFWQIGGN), 1239–1259 (NAGDLTMVIGALYAAIIFVGI), 1299–1319 (LPYVLIQTVYYSLIVYAMVGF), 1326–1346 (FFWFVFVSYFSFLYWTYYGMM), 1356–1376 (VASIFASAFYGIFNLFSGFFI), 1384–1404 (WWIWYYWICPVAWTVYGLIVS), and 1441–1461 (PVAAVLIAFTVFFAFIFAFCI).

It belongs to the ABC transporter superfamily. ABCG family. PDR (TC 3.A.1.205) subfamily. Interacts, in a Ca(2+)-dependent manner, with calmodulins CaM3, CaM7 and several CaM-like proteins (CML8, CML9, CML12/CAL4, CML37 and CML38), as well as with calcium regulated proteins CBL4/SOS3 and KIC. In terms of processing, phosphorylated upon perception of pathogen-associated molecular patterns (PAMPs); phosphorylations at Ser-40 and Ser-45, which likely regulate transport activity, are required for plant defense against pathogens (e.g. Blumeria graminis), but dispensable for recruitment to the host-pathogen interface and penetration sites. Phosphorylation at Ser-841 seems to be required for protein stability. As to expression, ubiquitous (at protein level). Higher levels in root hairs, stomata, epidermal cells, and hydathodes. Concentrated at the infection site of infected plants, including papillae and haustoria. Accumulates at the periphery of lateral root cap and root epidermal cells, especially in the outer lateral membrane domain facing the environment.

It is found in the cell membrane. It localises to the golgi apparatus. Its subcellular location is the trans-Golgi network membrane. The protein resides in the endoplasmic reticulum membrane. Functionally, together with ABCG37, regulates auxin homeostasis and responses by playing a dual role in coumarin (e.g. esculin) and in the auxin precursor indole 3-butyric acid (IBA) efflux transport, thus influencing cotyledons, roots and root hairs development. Mediates the transport (export into the apoplast) of distinct indole-type metabolites in distinct biological processes; a precursor of 4-O-beta-D-glucosyl-indol-3-yl formamide (4OGlcI3F), a pathogen-inducible tryptophan-derived compound (e.g. upon Blumeria graminis conidiospore inoculation), being a probable substrate in extracellular pathogen defense. Involved in the cellular detoxification of xenobiotics by promoting the excretion of some auxinic herbicides including 4-(2,4-dichlorophenoxy)butyric acid (2,4-DB) and other members of the phenoxyalkanoic acid family but not 2,4-dichlorophenoxyacetic acid (2,4-D). Mediates thymidine exudation in the rhizosphere. May be a transporter of lignin precursors during tracheary element differentiation. Key factor that controls the extent of cell death in the defense response. Necessary for both callose deposition and glucosinolate activation in response to pathogens. As a central component of nonhost resistance (NHR), required for limiting invasion by nonadapted pathogens including powdery mildews (e.g. Blumeria graminis and Erysiphe pisi), root-penetrating pathogenic fungi (e.g. Fusarium oxysporum), Phakopsora pachyrhizi and Colletotrichum gloeosporioides (anthracnose fungi), probably by sensing Ca(2+) via interactions with calmodulins (e.g. CaM7). Confers resistance to cadmium (Cd) and lead (Pb), probably as an efflux pump of Cd2+ or Cd conjugates, and possibly, of chemicals that mediate pathogen resistance. Promotes resistance to abiotic stresses (e.g. drought and salt stress) and favors general growth by preventing sodium accumulation in plants. Required for microbe-associated molecular patterns (MAMPs)- and salicylic acid (SA)-dependent hypersensitive cell death (HR), involving indole glucosinolate breakdown products (e.g. indole-3-acetonitrile), probably in a PEN2 myrosinase-dependent metabolic pathway, triggered by the recognition of effectors from incompatible pathogens including oomycetes and bacteria (e.g. AvrRpm1 and AvrRps4) and benzothiadiazole- (BTH), and leading to an induced protection against pathogens (e.g. Pseudomonas syringae pv. tomato DC3000, Golovinomyces orontii and Hyaloperonospora arabidopsidis). The protein is ABC transporter G family member 36 of Arabidopsis thaliana (Mouse-ear cress).